The chain runs to 270 residues: Transcription factor PU.1 (270 aa).

Residues S123–T164 form a disordered region. S140 and S146 each carry phosphoserine. Low complexity predominate over residues L153 to T164. The segment at residues I170–S253 is a DNA-binding region (ETS). 4 residues coordinate DNA: K217, R230, R233, and K243.

Belongs to the ETS family. In terms of assembly, binds DNA as a monomer. Can form homomers. Directly interacts with CEBPD/NF-IL6-beta; this interaction does not affect DNA-binding properties of each partner. Interacts with NONO/p54(nrb). Interacts with RUNX1/AML1. Interacts with GFI1; the interaction represses SPI1 transcriptional activity, hence blocks SPI1-induced macrophage differentiation of myeloid progenitor cells. Interacts with CEBPE. Interacts with IRF4/Pip and IRF8. Interacts with JUN. Interacts with RB1. Interacts with TBP. As to expression, in the bone marrow, concentrated in hematopoietic stem cell, lymphoid progenitor, myeloid lineage (granulocyte macrophage progenitors, classical dendritic cells, monocytes) and B-cell clusters. Among B-cells, predominantly expressed in pre-B1 cells. Expressed in germinal center B-cells.

The protein resides in the nucleus. Transcriptional activity at macrophage-specific genes is inhibited by interaction with GFI1, which results in the inhibition of SPI1-induced macrophage differentiation of myeloid progenitor cells, but not that of the granulocyte lineage. Pioneer transcription factor, which controls hematopoietic cell fate by decompacting stem cell heterochromatin and allowing other transcription factors to enter otherwise inaccessible genomic sites. Once in open chromatin, can directly control gene expression by binding genetic regulatory elements and can also more broadly influence transcription by recruiting transcription factors, such as interferon regulatory factors (IRFs), to otherwise inaccessible genomic regions. Transcriptionally activates genes important for myeloid and lymphoid lineages, such as CSF1R. Transcriptional activation from certain promoters, possibly containing low affinity binding sites, is achieved cooperatively with other transcription factors. FCER1A transactivation is achieved in cooperation with GATA1. May be particularly important for the pro- to pre-B cell transition. Binds (via the ETS domain) onto the purine-rich DNA core sequence 5'-GAGGAA-3', also known as the PU-box. In vitro can bind RNA and interfere with pre-mRNA splicing. The polypeptide is Transcription factor PU.1 (SPI1) (Homo sapiens (Human)).